The sequence spans 253 residues: uncharacterized protein (253 aa).

2 consecutive EamA domains span residues 1–97 and 116–237; these read MFFM…IYSL and FFWA…ISRL. 8 helical membrane-spanning segments follow: residues 2–22, 28–48, 53–73, 80–100, 101–121, 138–158, 162–182, and 214–234; these read FFMA…AKQL, IFLL…GLLY, ESAV…TLIL, TEVI…LNLG, IYFS…WALF, AVQL…QFYF, INFL…SFYL, and GVNV…GILI.

The protein belongs to the EamA transporter family.

It localises to the cell membrane. This is an uncharacterized protein from Acidianus ambivalens (Desulfurolobus ambivalens).